Reading from the N-terminus, the 90-residue chain is Small ribosomal subunit protein bS16 (90 aa).

Belongs to the bacterial ribosomal protein bS16 family.

This chain is Small ribosomal subunit protein bS16, found in Clostridioides difficile (strain 630) (Peptoclostridium difficile).